A 392-amino-acid polypeptide reads, in one-letter code: Frizzled-9 (392 aa).

Residues 1–35 (ACDNPEKFQYVEKSLSCAPRCSPGVDVYWSREDKD) lie on the Extracellular side of the membrane. The chain crosses the membrane as a helical span at residues 36-56 (FAFVWMAVWSTLCFVSTAFTV). Residues 57-72 (LTFLLDPHRFQYPERP) lie on the Cytoplasmic side of the membrane. The helical transmembrane segment at 73 to 93 (IIFLSMCYNVYSVAFIIRSVA) threads the bilayer. Over 94 to 119 (GAETIACDRENGELYIIQEGLESTGC) the chain is Extracellular. The chain crosses the membrane as a helical span at residues 120–140 (TIVFLILYYFGMASSLWWVVL). At 141–161 (TLTWFLAAGKKWGHEAIEAHS) the chain is on the cytoplasmic side. Residues 162-182 (SYFHMAAWGIPAMKTIVILTM) traverse the membrane as a helical segment. Residues 183–206 (RKVAGDELTGLCYVGSMDVSALTG) are Extracellular-facing. Residues 207–227 (FVLIPLSCYLVVGTSFILTGF) traverse the membrane as a helical segment. Residues 228-253 (VALFHIRKIMKTGGTNTEKLEKLMVK) lie on the Cytoplasmic side of the membrane. The helical transmembrane segment at 254-274 (IGVFSILYTVPATCVIVCYFY) threads the bilayer. The Extracellular portion of the chain corresponds to 275-312 (ERLNVDYWNLRALERACVPLPGRRAADCSLEASVPTVA). A helical transmembrane segment spans residues 313–333 (VFMLKIFMSLVVGITSGVWVW). Residues 334–392 (SSKTLQTWQSLCNRKLGVRTRGKPCSGVSCGGVHCHYKAPTVMLHMTKTDPYLDNPTHV) are Cytoplasmic-facing. The Lys-Thr-X-X-X-Trp motif, mediates interaction with the PDZ domain of Dvl family members signature appears at 336–341 (KTLQTW). Residues 390–392 (THV) carry the PDZ-binding motif.

It belongs to the G-protein coupled receptor Fz/Smo family.

The protein localises to the cell membrane. Receptor for WNT2 that is coupled to the beta-catenin canonical signaling pathway, which leads to the activation of disheveled proteins, inhibition of GSK-3 kinase, nuclear accumulation of beta-catenin and activation of Wnt target genes. In Gallus gallus (Chicken), this protein is Frizzled-9 (FZD9).